The sequence spans 661 residues: UvrABC system protein B (661 aa).

In terms of domain architecture, Helicase ATP-binding spans 25-178; it reads EGILKGEKFQ…DEVIRDLIRM (154 aa). 38–45 serves as a coordination point for ATP; it reads GVTGSGKT. The Beta-hairpin motif lies at 91 to 114; that stretch reads YYDYYQPEAYIPETDTYIEKDSSI. The Helicase C-terminal domain maps to 429 to 591; it reads QIDHLIGEIR…IVPQTVRKGI (163 aa). The region spanning 625 to 660 is the UVR domain; it reads EEYIKELEQEMKKLAIELEFEKAAKVRDKIFELKKL.

Belongs to the UvrB family. In terms of assembly, forms a heterotetramer with UvrA during the search for lesions. Interacts with UvrC in an incision complex.

The protein localises to the cytoplasm. The UvrABC repair system catalyzes the recognition and processing of DNA lesions. A damage recognition complex composed of 2 UvrA and 2 UvrB subunits scans DNA for abnormalities. Upon binding of the UvrA(2)B(2) complex to a putative damaged site, the DNA wraps around one UvrB monomer. DNA wrap is dependent on ATP binding by UvrB and probably causes local melting of the DNA helix, facilitating insertion of UvrB beta-hairpin between the DNA strands. Then UvrB probes one DNA strand for the presence of a lesion. If a lesion is found the UvrA subunits dissociate and the UvrB-DNA preincision complex is formed. This complex is subsequently bound by UvrC and the second UvrB is released. If no lesion is found, the DNA wraps around the other UvrB subunit that will check the other stand for damage. The protein is UvrABC system protein B of Caldicellulosiruptor bescii (strain ATCC BAA-1888 / DSM 6725 / KCTC 15123 / Z-1320) (Anaerocellum thermophilum).